The chain runs to 3828 residues: Histone-lysine N-methyltransferase trithorax (3828 aa).

3 disordered regions span residues 25–179, 356–390, and 512–589; these read EDEA…AAAA, AVKS…ATKQ, and FRKQ…RSTR. Positions 29–57 are enriched in low complexity; the sequence is ASAAAAAAAATAATTEQHQQSEQSAGSSA. The span at 77 to 89 shows a compositional bias: polar residues; it reads AATSGNRGASSGA. Residues 101–114 show a composition bias toward low complexity; the sequence is GNGSSTGSKTTNGG. Residues 152–165 are compositionally biased toward acidic residues; that stretch reads DGTEDTNNDDDDDS. The segment covering 359-387 has biased composition (low complexity); that stretch reads SSGSSPNPNHNPNAVAGSTSAAAPGAPTA. The segment covering 513 to 523 has biased composition (basic and acidic residues); the sequence is RKQEPQHKTPE. Acidic residues predominate over residues 524–553; it reads DNDDDGSASSDAIEDDEDIDDDDAEENEEA. The span at 554-581 shows a compositional bias: basic and acidic residues; it reads ASEKSAETTASVDEKEADDRQLVMDKHF. The nuclear receptor DNA-binding region spans 725–839; the sequence is ASTCAVCSAP…AGHRSRLSAI (115 aa). Disordered regions lie at residues 933–1036, 1075–1094, and 1131–1170; these read ESKE…SAVP, ELAA…TTSP, and AQPA…TTRN. Basic and acidic residues predominate over residues 960-974; the sequence is AKQDKEKARELEAEK. 2 stretches are compositionally biased toward low complexity: residues 998–1022 and 1078–1094; these read ASTT…TNSS and AAEA…TTSP. Positions 1140-1170 are enriched in polar residues; it reads ESRSSKSNTQTEAKKTPATSGSSKGKVTTRN. PHD-type zinc fingers lie at residues 1251–1334, 1335–1380, and 1408–1469; these read RALC…CTVC, YTCN…CLKC, and GNFC…CARR. The Bromo domain maps to 1483-1644; the sequence is AVMEEFKSSL…SEQFPWFQNE (162 aa). The segment at 1708-1748 adopts a C2HC pre-PHD-type zinc-finger fold; it reads TRVCLFCRKSGEGLSGEEARLLYCGHDCWVHINCAMWSAEV. Residues 1769-1816 form a PHD-type 4 zinc finger; it reads IKCTVCGNRGATVGCNVKSCGEHYHYPCARTIDCAFLTDKSMYCPAHA. In terms of domain architecture, FYR N-terminal spans 1856–1913; it reads KVQFHIGSVAVRQLGSIVPRFSDSFEAIVPINFLCSRLYWSSKEPWKIVEYTVRTTIQ. Disordered regions lie at residues 2252–2272, 2464–2510, 2826–2848, 2897–2973, 2988–3031, 3117–3178, 3314–3338, and 3457–3487; these read CEPM…AQLS, AHQK…QQQQ, RNTN…PQQS, RQQQ…SPAA, APAP…QLSM, ASAN…VPAG, NGSG…DDDD, and KLDV…PMRD. Composition is skewed to low complexity over residues 2253 to 2268, 2483 to 2510, and 2836 to 2848; these read EPMS…ATGT, QGQQ…QQQQ, and SVLS…PQQS. Residues 2897-2917 are compositionally biased toward polar residues; it reads RQQQANELKNKQAAGQQTGST. Composition is skewed to low complexity over residues 2956–2973, 2988–2997, 3005–3031, and 3117–3132; these read ATSA…SPAA, APAPQPQQQE, LHQQ…QLSM, and ASAN…QQNS. A compositionally biased stretch (polar residues) spans 3148–3164; the sequence is QQRQEPTPLSNDVVVQS. Positions 3328 to 3338 are enriched in acidic residues; that stretch reads DDAEEDEDDDD. One can recognise an FYR C-terminal domain in the interval 3493–3577; that stretch reads GPHLLYEIQS…EKCVKYTPKY (85 aa). Residues 3690–3806 form the SET domain; the sequence is DYVGVFRSHI…QGEELTYDYK (117 aa). Residues H3700, R3702, Y3744, and 3767-3768 contribute to the S-adenosyl-L-methionine site; that span reads NH. Zn(2+)-binding residues include C3770, C3816, C3818, and C3823. Residues 3812–3828 enclose the Post-SET domain; it reads EKIPCSCGSKRCRKYLN.

Belongs to the class V-like SAM-binding methyltransferase superfamily. Histone-lysine methyltransferase family. TRX/MLL subfamily. Interacts with ash1 via its SET domain.

The protein localises to the nucleus. It catalyses the reaction L-lysyl(9)-[histone H3] + 3 S-adenosyl-L-methionine = N(6),N(6),N(6)-trimethyl-L-lysyl(9)-[histone H3] + 3 S-adenosyl-L-homocysteine + 3 H(+). Histone methyltransferase that methylates 'Lys-4' of histone H3 (H3K4me). H3K4me represents a specific tag for epigenetic transcriptional activation. Functions in segment determination through interaction with genes of bithorax (BX-C) and antennapedia (ANT-C) complexes. Acts as an activator of BX-C. Involved in the very early regulation of homeotic genes expressed only in the posterior region of the embryo. This Drosophila virilis (Fruit fly) protein is Histone-lysine N-methyltransferase trithorax (trx).